A 527-amino-acid polypeptide reads, in one-letter code: MTADLLPVRRALLSVSDKTGLVELATALAARGVELLSTGGTAKAIRDAGLAVKDVADVTGFPEMMDGRVKTLHPMVHGGLLGRSGLDDAVMAEHGIGAIDLLVLNLYPFESVTAKADCTLADAVENIDIGGPAMLRSAAKNFARVAVATDPSQYAELLASLDANDGQLSASTRFAFSVAAFNRVAQYDAAISNYLSAVTATDAAVPARAEYPAQMNSTFVKVMDLRYGENPHQSGAFYRDLYPVPGTLATFQQLQGKELSYNNLADADAAWECVRQFDAPACVIVKHANPCGVAVGAGNGDAYELAYATDPTSAFGGIIAFNKPLDAATAKVILDRQFVEVLIAPDYEPAALEYAQKKANVRVLRIPHGDGLNNFDSKRVGSGLLLQSSDNRGMTRDELKVVSKLAPTDKQFTDLLFAWKVAKFVKSNAIVYAKDNRTIGVGAGQMSRVYSARIAGIKAADANLVVEGSVMASDAFFPFRDGIDAAAAAGIKAVIQPGGSMRDAEVIAAADEHGLAMVFTGVRHFRH.

The MGS-like domain occupies 1 to 149; it reads MTADLLPVRR…KNFARVAVAT (149 aa).

It belongs to the PurH family.

The catalysed reaction is (6R)-10-formyltetrahydrofolate + 5-amino-1-(5-phospho-beta-D-ribosyl)imidazole-4-carboxamide = 5-formamido-1-(5-phospho-D-ribosyl)imidazole-4-carboxamide + (6S)-5,6,7,8-tetrahydrofolate. It carries out the reaction IMP + H2O = 5-formamido-1-(5-phospho-D-ribosyl)imidazole-4-carboxamide. Its pathway is purine metabolism; IMP biosynthesis via de novo pathway; 5-formamido-1-(5-phospho-D-ribosyl)imidazole-4-carboxamide from 5-amino-1-(5-phospho-D-ribosyl)imidazole-4-carboxamide (10-formyl THF route): step 1/1. It functions in the pathway purine metabolism; IMP biosynthesis via de novo pathway; IMP from 5-formamido-1-(5-phospho-D-ribosyl)imidazole-4-carboxamide: step 1/1. The protein is Bifunctional purine biosynthesis protein PurH of Stenotrophomonas maltophilia (strain K279a).